A 123-amino-acid polypeptide reads, in one-letter code: MKFSLKDLFGLVVSFGLIFLALTIGSGIQHWTGTSVPGSVIGMLVLFVSMAIGLVKVEWVKPGASLLIRYMILLFVPISVGLMEHFDMLIANALPIIASAIGGSLIVLVSLGWLLQRILGKEA.

4 consecutive transmembrane segments (helical) span residues 8–28 (LFGL…GSGI), 35–55 (SVPG…IGLV), 71–91 (MILL…MLIA), and 94–114 (LPII…LGWL).

The protein belongs to the UPF0299 family.

The protein resides in the cell inner membrane. This Vibrio vulnificus (strain YJ016) protein is UPF0299 membrane protein VV1471.